Consider the following 605-residue polypeptide: Elongation factor 4 (605 aa).

Residues 4–186 form the tr-type G domain; the sequence is SATRNFCIIA…AIVARVPAPK (183 aa). Residues 16–21 and 133–136 contribute to the GTP site; these read DHGKST and NKID.

The protein belongs to the TRAFAC class translation factor GTPase superfamily. Classic translation factor GTPase family. LepA subfamily.

The protein resides in the cell membrane. The catalysed reaction is GTP + H2O = GDP + phosphate + H(+). Functionally, required for accurate and efficient protein synthesis under certain stress conditions. May act as a fidelity factor of the translation reaction, by catalyzing a one-codon backward translocation of tRNAs on improperly translocated ribosomes. Back-translocation proceeds from a post-translocation (POST) complex to a pre-translocation (PRE) complex, thus giving elongation factor G a second chance to translocate the tRNAs correctly. Binds to ribosomes in a GTP-dependent manner. The chain is Elongation factor 4 from Dehalococcoides mccartyi (strain ATCC BAA-2266 / KCTC 15142 / 195) (Dehalococcoides ethenogenes (strain 195)).